The chain runs to 96 residues: UPF0235 protein Ent638_3359 (96 aa).

This sequence belongs to the UPF0235 family.

The polypeptide is UPF0235 protein Ent638_3359 (Enterobacter sp. (strain 638)).